The chain runs to 249 residues: Sulfate transporter CysZ (249 aa).

The next 4 membrane-spanning stretches (helical) occupy residues 26 to 46 (LFVL…IYFA), 71 to 91 (VIWP…FTML), 150 to 170 (LFIL…WLLF), and 206 to 226 (LGFG…ILMM).

It belongs to the CysZ family.

It localises to the cell inner membrane. Functionally, high affinity, high specificity proton-dependent sulfate transporter, which mediates sulfate uptake. Provides the sulfur source for the cysteine synthesis pathway. The protein is Sulfate transporter CysZ of Pseudomonas fluorescens (strain ATCC BAA-477 / NRRL B-23932 / Pf-5).